The sequence spans 260 residues: MPGFSSPAIILRRTAYAEYDTILDLLTLERGRITAMAKNARKSKKRFAGILEPFCCLDAVFTDPSARSGMTILKEAAMTAPFGAIRLNMEKVAYASYWSEMVNRWVKEDDTQSALFHLLHYVLFMLDSGKASHADLSILFQVRFMTLAGLFPGMAACRVCKTEIDRLSGSPTLYLDIARGGIVCHRCGGEGAGSQYRKPLSRGLVKQFLWVRETDLPQAERMRFTAAAREQGLAALEAFVTYHLAMEIKSLKVLQRIRHW.

Belongs to the RecO family.

In terms of biological role, involved in DNA repair and RecF pathway recombination. The polypeptide is DNA repair protein RecO (Desulfosudis oleivorans (strain DSM 6200 / JCM 39069 / Hxd3) (Desulfococcus oleovorans)).